The primary structure comprises 61 residues: Large ribosomal subunit protein bL32 (61 aa).

The interval 1-20 (MAVQKSKPSRAKRGKRRSHD) is disordered. Basic residues predominate over residues 7-19 (KPSRAKRGKRRSH).

It belongs to the bacterial ribosomal protein bL32 family.

The sequence is that of Large ribosomal subunit protein bL32 from Buchnera aphidicola subsp. Cinara cedri (strain Cc).